Reading from the N-terminus, the 181-residue chain is Putative NAD(P)H-dependent FMN-containing oxidoreductase YwqN (181 aa).

The protein belongs to the SsuE family. Requires FMN as cofactor.

Its function is as follows. Putative NADPH-dependent oxidoreductase. The polypeptide is Putative NAD(P)H-dependent FMN-containing oxidoreductase YwqN (ywqN) (Bacillus subtilis (strain 168)).